We begin with the raw amino-acid sequence, 427 residues long: Serine hydroxymethyltransferase (427 aa).

(6S)-5,6,7,8-tetrahydrofolate contacts are provided by residues Leu117 and 121–123 (GHL). Residue Lys226 is modified to N6-(pyridoxal phosphate)lysine.

Belongs to the SHMT family. In terms of assembly, homodimer. Pyridoxal 5'-phosphate is required as a cofactor.

It localises to the cytoplasm. The enzyme catalyses (6R)-5,10-methylene-5,6,7,8-tetrahydrofolate + glycine + H2O = (6S)-5,6,7,8-tetrahydrofolate + L-serine. The catalysed reaction is L-threonine = acetaldehyde + glycine. It catalyses the reaction L-allo-threonine = acetaldehyde + glycine. The protein operates within one-carbon metabolism; tetrahydrofolate interconversion. It participates in amino-acid biosynthesis; glycine biosynthesis; glycine from L-serine: step 1/1. Functionally, its primary function is to catalyze the reversible interconversion of serine and glycine with tetrahydrofolate (THF) serving as the one-carbon carrier. This reaction serves as the major source of one-carbon groups required for the biosynthesis of purines, thymidylate, methionine, and other important biomolecules. Also exhibits THF-independent aldolase activity toward beta-hydroxyamino acids, producing glycine and aldehydes, via a retro-aldol mechanism. Thus, is able to catalyze the cleavage of L-threonine, L-allo-threonine, L-threo-beta-phenylserine and L-erythro-beta-phenylserine. This second activity is likely to be physiological in H.thermophilus, which is an organism that lacks the ortholog gene for the 'real' threonine aldolase characterized in mesophilic bacteria (LtaE), yeast and plants. The polypeptide is Serine hydroxymethyltransferase (Hydrogenobacter thermophilus (strain DSM 6534 / IAM 12695 / TK-6)).